The chain runs to 437 residues: GTPase Obg (437 aa).

The region spanning 2–160 is the Obg domain; the sequence is SMFLDTAKIS…RQLELELKIL (159 aa). Residues 161-338 form the OBG-type G domain; sequence ADVGLVGFPS…LLEATAELLA (178 aa). Residues 167–174, 192–196, 214–217, 284–287, and 319–321 each bind GTP; these read GFPSVGKS, FTTIV, DLPG, NKMD, and SSL. Residues serine 174 and threonine 194 each contribute to the Mg(2+) site. The OCT domain occupies 359 to 437; sequence GFAETEKDFE…IGKFEFEFVD (79 aa).

It belongs to the TRAFAC class OBG-HflX-like GTPase superfamily. OBG GTPase family. As to quaternary structure, monomer. The cofactor is Mg(2+).

The protein localises to the cytoplasm. Functionally, an essential GTPase which binds GTP, GDP and possibly (p)ppGpp with moderate affinity, with high nucleotide exchange rates and a fairly low GTP hydrolysis rate. Plays a role in control of the cell cycle, stress response, ribosome biogenesis and in those bacteria that undergo differentiation, in morphogenesis control. The protein is GTPase Obg of Streptococcus pyogenes serotype M4 (strain MGAS10750).